The following is a 152-amino-acid chain: Small ribosomal subunit protein bS16 (152 aa).

The disordered stretch occupies residues 84–152 (WKWEASNNPQ…EAAAEEEKSE (69 aa)). Over residues 97-123 (PGQKAKELAAEKAEKEADRKAAEEEAK) the composition is skewed to basic and acidic residues. Residues 124 to 144 (AAAAAPAAEEAPAEEAPAAEA) show a composition bias toward low complexity.

It belongs to the bacterial ribosomal protein bS16 family.

This Maricaulis maris (strain MCS10) (Caulobacter maris) protein is Small ribosomal subunit protein bS16.